Reading from the N-terminus, the 677-residue chain is DNA ligase (677 aa).

NAD(+) is bound by residues 38–42, 87–88, and Glu119; these read DSVYD and SL. Catalysis depends on Lys121, which acts as the N6-AMP-lysine intermediate. The NAD(+) site is built by Arg142, Glu179, Lys296, and Lys320. Zn(2+)-binding residues include Cys414, Cys417, Cys432, and Cys438. Residues 595–677 form the BRCT domain; that stretch reads VVKSEIAGKT…LKLLKSKGVF (83 aa).

This sequence belongs to the NAD-dependent DNA ligase family. LigA subfamily. Mg(2+) serves as cofactor. It depends on Mn(2+) as a cofactor.

The catalysed reaction is NAD(+) + (deoxyribonucleotide)n-3'-hydroxyl + 5'-phospho-(deoxyribonucleotide)m = (deoxyribonucleotide)n+m + AMP + beta-nicotinamide D-nucleotide.. DNA ligase that catalyzes the formation of phosphodiester linkages between 5'-phosphoryl and 3'-hydroxyl groups in double-stranded DNA using NAD as a coenzyme and as the energy source for the reaction. It is essential for DNA replication and repair of damaged DNA. The chain is DNA ligase from Coxiella burnetii (strain CbuG_Q212) (Coxiella burnetii (strain Q212)).